Consider the following 102-residue polypeptide: Large ribosomal subunit protein bL21 (102 aa).

Belongs to the bacterial ribosomal protein bL21 family. As to quaternary structure, part of the 50S ribosomal subunit. Contacts protein L20.

In terms of biological role, this protein binds to 23S rRNA in the presence of protein L20. The sequence is that of Large ribosomal subunit protein bL21 from Staphylococcus haemolyticus (strain JCSC1435).